We begin with the raw amino-acid sequence, 188 residues long: Apolipoprotein M (188 aa).

The segment at residues 1-22 (MFHQIWAALLYLYGILLNSIYQ) is a signal peptide (not cleaved). 3 disulfides stabilise this stretch: Cys-23-Cys-167, Cys-95-Cys-183, and Cys-128-Cys-157. Glu-136 and Arg-143 together coordinate tetradecanoate.

It belongs to the calycin superfamily. Lipocalin family. Highly divergent. In terms of assembly, interacts with LRP2; LRP2 mediates APOM renal uptake and subsequent lysosomal degradation.

It is found in the secreted. Probably involved in lipid transport. Can bind sphingosine-1-phosphate, myristic acid, palmitic acid and stearic acid, retinol, all-trans-retinoic acid and 9-cis-retinoic acid. This Sus scrofa (Pig) protein is Apolipoprotein M (APOM).